Consider the following 869-residue polypeptide: Retrovirus-related Pol polyprotein from type-1 retrotransposable element R2 (869 aa).

One can recognise a Reverse transcriptase domain in the interval 199–475 (IFVFYGRVPS…DLWKYLGVVY (277 aa)). The nucleic acid-binding endonuclease stretch occupies residues 601–869 (LYASISHSCK…FNNVTTVVHW (269 aa)).

The catalysed reaction is DNA(n) + a 2'-deoxyribonucleoside 5'-triphosphate = DNA(n+1) + diphosphate. The sequence is that of Retrovirus-related Pol polyprotein from type-1 retrotransposable element R2 from Bradysia coprophila (Dark-winged fungus gnat).